We begin with the raw amino-acid sequence, 124 residues long: Small ribosomal subunit protein uS13 (124 aa).

The interval 97–124 is disordered; the sequence is PVRGQRTKTNARTRKGPKRTIAGKKKAR.

Belongs to the universal ribosomal protein uS13 family. Part of the 30S ribosomal subunit. Forms a loose heterodimer with protein S19. Forms two bridges to the 50S subunit in the 70S ribosome.

Functionally, located at the top of the head of the 30S subunit, it contacts several helices of the 16S rRNA. In the 70S ribosome it contacts the 23S rRNA (bridge B1a) and protein L5 of the 50S subunit (bridge B1b), connecting the 2 subunits; these bridges are implicated in subunit movement. Contacts the tRNAs in the A and P-sites. The chain is Small ribosomal subunit protein uS13 from Mycolicibacterium gilvum (strain PYR-GCK) (Mycobacterium gilvum (strain PYR-GCK)).